We begin with the raw amino-acid sequence, 703 residues long: Bifunctional arginine dihydrolase/ornithine cyclodeaminase AgrE (703 aa).

Residues 10 to 269 (CPPDHYDVDY…GAAKCLTLRV (260 aa)) form an arginine dihydrolase region. L-arginine is bound by residues N22, D65, N71, R90, and R139. Residue N22 participates in L-ornithine binding. 3 residues coordinate L-ornithine: R90, R139, and H168. The active-site Proton donor/acceptor is H168. L-arginine contacts are provided by D170 and A258. C264 contributes to the L-ornithine binding site. The Nucleophile role is filled by C264. Residues 285–694 (SRIIRIEGHL…SLLTQQLDKL (410 aa)) are ornithine cyclodeaminase. N524, A525, D603, S635, M636, L637, H638, D656, D679, and V680 together coordinate NAD(+).

In the N-terminal section; belongs to the DDAH family. This sequence in the C-terminal section; belongs to the AgrE/ArgZ ornithine cyclodeaminase family. Homotetramer. It depends on NAD(+) as a cofactor.

It catalyses the reaction L-arginine + 2 H2O + 2 H(+) = L-ornithine + 2 NH4(+) + CO2. The enzyme catalyses L-ornithine = L-proline + NH4(+). With respect to regulation, ornithine cyclodeaminase activity is inhibited by ATP. Its function is as follows. Bifunctional enzyme involved in a cyanobacterial arginine utilization pathway that produces glutamate and enables cellular adaptation to nitrogen fluctuations. Catalyzes the hydrolysis of arginine to ornithine, with the release of ammonia and carbon dioxide. Then, catalyzes the conversion of ornithine to proline, with the release of ammonia. In Nostoc sp. (strain PCC 7120 / SAG 25.82 / UTEX 2576), this protein is Bifunctional arginine dihydrolase/ornithine cyclodeaminase AgrE.